The primary structure comprises 396 residues: Actin-related protein 6 (396 aa).

Residue Thr-2 is modified to N-acetylthreonine. Lys-260 carries the N6-acetyllysine modification.

The protein belongs to the actin family. ARP6 subfamily. In terms of assembly, component of the chromatin-remodeling SRCAP complex composed of at least SRCAP, DMAP1, RUVBL1, RUVBL2, ACTL6A, YEATS4, ACTR6 and ZNHIT1. Interacts with CBX1, CBX3 and CBX5.

It is found in the cytoplasm. It localises to the cytoskeleton. The protein localises to the nucleus. Its subcellular location is the nucleolus. Required for formation and/or maintenance of proper nucleolar structure and function. Plays a dual role in the regulation of ribosomal DNA (rDNA) transcription. In the presence of high glucose, maintains active rDNA transcription through H2A.Z deposition and under glucose starvation, is required for the repression of rDNA transcription, and this function may be independent of H2A.Z. The chain is Actin-related protein 6 (Actr6) from Mus musculus (Mouse).